Here is a 122-residue protein sequence, read N- to C-terminus: Phospholipase A2 crotoxin basic subunit CBb (122 aa).

7 disulfide bridges follow: cysteine 26–cysteine 115, cysteine 28–cysteine 44, cysteine 43–cysteine 95, cysteine 49–cysteine 122, cysteine 50–cysteine 88, cysteine 57–cysteine 81, and cysteine 75–cysteine 86. Ca(2+) contacts are provided by tyrosine 27, glycine 29, and glycine 31. Histidine 47 is an active-site residue. A Ca(2+)-binding site is contributed by aspartate 48. Aspartate 89 is a catalytic residue.

Belongs to the phospholipase A2 family. Group II subfamily. D49 sub-subfamily. As to quaternary structure, heterodimer of one of the acidic (CA1, CA2, CA3 or CA4) and one of the basic (CBa1, CBa2, CBb, CBc or CBd) subunits; non-covalently linked. The acidic subunit is non-toxic, without enzymatic activity and comprises 3 peptides that are cross-linked by 5 disulfide bridges. The basic subunit is toxic, has phospholipase A2 activity and is composed of a single chain. Multiple variants of each subunit give different crotoxin complexes that can be subdivided into 2 classes: (1) those of high toxicity, low PLA2 activity (CBb, CBc and CBd linked with high affinity to any CA) and high stability (K(d)=4.5 nM) and (2) those of moderate toxicity, high PLA2 activity (CBa2 linked with low affinity to any CA) and low stability (K(d)=25 nM). Requires Ca(2+) as cofactor. As to expression, expressed by the venom gland.

It is found in the secreted. The enzyme catalyses a 1,2-diacyl-sn-glycero-3-phosphocholine + H2O = a 1-acyl-sn-glycero-3-phosphocholine + a fatty acid + H(+). Its function is as follows. Heterodimer CA-CB: Crotoxin is a potent presynaptic neurotoxin that possesses phospholipase A2 (PLA2) activity and exerts a lethal action by blocking neuromuscular transmission. It consists of a non-covalent association of a basic and weakly toxic PLA2 subunit (CBa2, CBb, CBc, or CBd), with a small acidic, non-enzymatic and non-toxic subunit (CA1, CA2, CA3 or CA4). The complex acts by binding to a specific 48-kDa protein (R48) receptor located on presynaptic membranes, forming a transient ternary complex CA-CB-R48, followed by dissociation of the CA-CB complex and release of the CA subunit. At equilibrium, only the CB subunits remain associated with the specific crotoxin receptor. In addition to neurotoxicity, crotoxin has been found to exert myotoxicity, nephrotoxicity, and cardiovascular toxicity. Moreover, anti-inflammatory, immunomodulatory, anti-tumor and analgesic effects of crotoxin have also been reported. Functionally, monomer CBb: The basic subunit of crotoxin is a snake venom phospholipase A2 (PLA2) that exhibits weak neurotoxicity (10-fold less than the heterodimer) and strong anticoagulant effects by binding to factor Xa (F10) and inhibiting the prothrombinase activity. In addition, it shows the same effects described for the heterodimer and binds the nucleotide-binding domain (NBD1) of CFTR chloride channels and increases the channel current. PLA2 catalyzes the calcium-dependent hydrolysis of the 2-acyl groups in 3-sn-phosphoglycerides. The sequence is that of Phospholipase A2 crotoxin basic subunit CBb from Crotalus durissus terrificus (South American rattlesnake).